The chain runs to 504 residues: Maturase K (504 aa).

It belongs to the intron maturase 2 family. MatK subfamily.

The protein resides in the plastid. The protein localises to the chloroplast. In terms of biological role, usually encoded in the trnK tRNA gene intron. Probably assists in splicing its own and other chloroplast group II introns. This Quercus coccifera (Kermes oak) protein is Maturase K.